Reading from the N-terminus, the 476-residue chain is MAARIGPMAGLLCVRWWSTAQLAARGGPLVACRRWTSSSTDSVYDVVVSGGGMVGSAMACALGHDIHFHDKKILLLEAGPKKTLEKLSETYSNRVSSISLGSTTLLSSFGAWDHICNMRCKAFRRMQVWDSCSEALIMFDKDNLDDMGYIVENDVIMHAITKQLEAVADRVKVLYESKAVGYAWPGPFSLADSSPWVHITLGDGSTLQTKLLIGADGHNSGVRQAAGIQNVGWNYDQSAVVATLHLSEATENNVAWQRFLPSGPIALLPLSDTLSSLVWSTSHAHAAELVSMHEEEFVDAINSAFWSDVHHTDFVDSASAMVHHAVALLKPTKVSARQLPPSVAKVDAKSRALFPLGLGHAAEYVRPRVALIGDAAHRVHPLAGQGVNMGFGDISSLIHYLSTAAFNGKDLGSMSHLTGYETDRQRHNTALLAATDLLKRLYSTSTTPLVLLRTWGLQATNAVSPLKEQIMAFASR.

A mitochondrion-targeting transit peptide spans 1–42; sequence MAARIGPMAGLLCVRWWSTAQLAARGGPLVACRRWTSSSTDS.

The protein belongs to the UbiH/COQ6 family. Component of a multi-subunit COQ enzyme complex, composed of at least COQ3, COQ4, COQ5, COQ6, COQ7 and COQ9. Interacts with COQ8B and COQ7. FAD serves as cofactor. In terms of tissue distribution, in the kidney, expressed almost exclusively in glomerular podocytes. In the inner ear, expressed in the spiral ganglion, as well as in stria vascularis and spiral ligament cells.

The protein resides in the mitochondrion inner membrane. It localises to the golgi apparatus. The protein localises to the cell projection. The catalysed reaction is 4-hydroxy-3-(all-trans-decaprenyl)benzoate + 2 reduced [2Fe-2S]-[ferredoxin] + O2 + 2 H(+) = 3,4-dihydroxy-5-(all-trans-decaprenyl)benzoate + 2 oxidized [2Fe-2S]-[ferredoxin] + H2O. The enzyme catalyses 2-methoxy-6-(all-trans-decaprenyl)phenol + 2 reduced [2Fe-2S]-[ferredoxin] + O2 + 2 H(+) = 2-methoxy-6-(all-trans-decaprenyl)benzene-1,4-diol + 2 oxidized [2Fe-2S]-[ferredoxin] + H2O. It functions in the pathway cofactor biosynthesis; ubiquinone biosynthesis. Its function is as follows. FAD-dependent monooxygenase required for two non-consecutive steps during ubiquinone biosynthesis. Required for the C5-ring hydroxylation during ubiquinone biosynthesis by catalyzing the hydroxylation of 4-hydroxy-3-(all-trans-decaprenyl)benzoic acid to 3,4-dihydroxy-5-(all-trans-decaprenyl)benzoic acid. Also acts downstream of COQ4, for the C1-hydroxylation during ubiquinone biosynthesis by catalyzing the hydroxylation of 2-methoxy-6-(all-trans-decaprenyl)phenol to 2-methoxy-6-(all-trans-decaprenyl)benzene-1,4-diol. The electrons required for the hydroxylation reaction are funneled indirectly to COQ6 from NADPH via a ferredoxin/ferredoxin reductase system composed of FDX2 and FDXR. The polypeptide is Ubiquinone biosynthesis monooxygenase COQ6, mitochondrial (Rattus norvegicus (Rat)).